Reading from the N-terminus, the 479-residue chain is UDP-glycosyltransferase 85A8 (479 aa).

UDP-alpha-D-glucose contacts are provided by residues serine 302, 358 to 359 (WC), 376 to 384 (HSGWNSTIE), and 398 to 401 (FAEQ).

The protein belongs to the UDP-glycosyltransferase family.

Its function is as follows. May glycosylate diterpenes or flavonols in leaves. The protein is UDP-glycosyltransferase 85A8 of Stevia rebaudiana (Stevia).